We begin with the raw amino-acid sequence, 117 residues long: Fluoride-specific ion channel FluC 2 (117 aa).

A run of 4 helical transmembrane segments spans residues 1–21 (MITI…RALI), 33–53 (IPIA…FMMG), 61–81 (MFPF…TLSS), and 94–114 (IRFV…CFYG). Na(+) contacts are provided by glycine 71 and threonine 74.

Belongs to the fluoride channel Fluc/FEX (TC 1.A.43) family.

It is found in the cell membrane. It catalyses the reaction fluoride(in) = fluoride(out). Its activity is regulated as follows. Na(+) is not transported, but it plays an essential structural role and its presence is essential for fluoride channel function. Its function is as follows. Fluoride-specific ion channel. Important for reducing fluoride concentration in the cell, thus reducing its toxicity. The protein is Fluoride-specific ion channel FluC 2 of Staphylococcus epidermidis (strain ATCC 35984 / DSM 28319 / BCRC 17069 / CCUG 31568 / BM 3577 / RP62A).